Reading from the N-terminus, the 446-residue chain is Maltoporin (446 aa).

An N-terminal signal peptide occupies residues 1 to 25; it reads MMTTLRKLPLAVAVAAGMMSVQAMA.

This sequence belongs to the porin LamB (TC 1.B.3) family. As to quaternary structure, homotrimer formed of three 18-stranded antiparallel beta-barrels, containing three independent channels.

The protein localises to the cell outer membrane. The enzyme catalyses beta-maltose(in) = beta-maltose(out). Functionally, involved in the transport of maltose and maltodextrins. This Escherichia fergusonii (strain ATCC 35469 / DSM 13698 / CCUG 18766 / IAM 14443 / JCM 21226 / LMG 7866 / NBRC 102419 / NCTC 12128 / CDC 0568-73) protein is Maltoporin.